Reading from the N-terminus, the 179-residue chain is Large ribosomal subunit protein uL5 (179 aa).

Belongs to the universal ribosomal protein uL5 family. Part of the 50S ribosomal subunit; part of the 5S rRNA/L5/L18/L25 subcomplex. Contacts the 5S rRNA and the P site tRNA. Forms a bridge to the 30S subunit in the 70S ribosome.

Functionally, this is one of the proteins that bind and probably mediate the attachment of the 5S RNA into the large ribosomal subunit, where it forms part of the central protuberance. In the 70S ribosome it contacts protein S13 of the 30S subunit (bridge B1b), connecting the 2 subunits; this bridge is implicated in subunit movement. Contacts the P site tRNA; the 5S rRNA and some of its associated proteins might help stabilize positioning of ribosome-bound tRNAs. In Maridesulfovibrio salexigens (strain ATCC 14822 / DSM 2638 / NCIMB 8403 / VKM B-1763) (Desulfovibrio salexigens), this protein is Large ribosomal subunit protein uL5.